The chain runs to 335 residues: Phosphate acyltransferase (335 aa).

It belongs to the PlsX family. As to quaternary structure, homodimer. Probably interacts with PlsY.

The protein localises to the cytoplasm. It catalyses the reaction a fatty acyl-[ACP] + phosphate = an acyl phosphate + holo-[ACP]. Its pathway is lipid metabolism; phospholipid metabolism. Functionally, catalyzes the reversible formation of acyl-phosphate (acyl-PO(4)) from acyl-[acyl-carrier-protein] (acyl-ACP). This enzyme utilizes acyl-ACP as fatty acyl donor, but not acyl-CoA. The chain is Phosphate acyltransferase from Streptococcus equi subsp. equi (strain 4047).